The chain runs to 374 residues: 3-isopropylmalate dehydrogenase (374 aa).

NAD(+) is bound at residue 83-96 (GPKWDNLPPEIRPE). The substrate site is built by R104, R114, R142, and D231. Residues D231, D255, and D259 each coordinate Mg(2+). 288–300 (GSAPDIAGQNKAN) provides a ligand contact to NAD(+).

The protein belongs to the isocitrate and isopropylmalate dehydrogenases family. LeuB type 1 subfamily. As to quaternary structure, homodimer. Requires Mg(2+) as cofactor. Mn(2+) is required as a cofactor.

Its subcellular location is the cytoplasm. It carries out the reaction (2R,3S)-3-isopropylmalate + NAD(+) = 4-methyl-2-oxopentanoate + CO2 + NADH. The protein operates within amino-acid biosynthesis; L-leucine biosynthesis; L-leucine from 3-methyl-2-oxobutanoate: step 3/4. Catalyzes the oxidation of 3-carboxy-2-hydroxy-4-methylpentanoate (3-isopropylmalate) to 3-carboxy-4-methyl-2-oxopentanoate. The product decarboxylates to 4-methyl-2 oxopentanoate. In Carboxydothermus hydrogenoformans (strain ATCC BAA-161 / DSM 6008 / Z-2901), this protein is 3-isopropylmalate dehydrogenase.